Reading from the N-terminus, the 248-residue chain is Prepilin leader peptidase/N-methyltransferase (248 aa).

Residues 1–21 (MLSILFIFGLILGSFYYTAGC) traverse the membrane as a helical segment. 4 residues coordinate Zn(2+): C36, C39, C61, and C64. The next 6 membrane-spanning stretches (helical) occupy residues 68 to 88 (ISFM…AAGI), 90 to 110 (FGIS…IIVA), 114 to 134 (IHFM…LAAA), 143 to 163 (WYAG…IAAI), 178 to 198 (VIGF…SVLI), and 223 to 243 (AIAA…SFYI).

It belongs to the peptidase A24 family. Zn(2+) serves as cofactor.

The protein localises to the cell membrane. It catalyses the reaction Typically cleaves a -Gly-|-Phe- bond to release an N-terminal, basic peptide of 5-8 residues from type IV prepilin, and then N-methylates the new N-terminal amino group, the methyl donor being S-adenosyl-L-methionine.. Plays a role in type II pseudopili formation by proteolytically removing the leader sequence from substrate proteins and subsequently monomethylating the alpha-amino group of the newly exposed N-terminal phenylalanine. Substrates include proteins required for biogenesis of the type II general secretory apparatus. The protein is Prepilin leader peptidase/N-methyltransferase (comC) of Bacillus subtilis (strain 168).